Reading from the N-terminus, the 365-residue chain is Ribosomal RNA large subunit methyltransferase M (365 aa).

Residues S187, 220-223 (CPGG), D239, D259, and D276 contribute to the S-adenosyl-L-methionine site. K305 acts as the Proton acceptor in catalysis.

This sequence belongs to the class I-like SAM-binding methyltransferase superfamily. RNA methyltransferase RlmE family. RlmM subfamily. In terms of assembly, monomer.

It is found in the cytoplasm. The enzyme catalyses cytidine(2498) in 23S rRNA + S-adenosyl-L-methionine = 2'-O-methylcytidine(2498) in 23S rRNA + S-adenosyl-L-homocysteine + H(+). Its function is as follows. Catalyzes the 2'-O-methylation at nucleotide C2498 in 23S rRNA. This Psychromonas ingrahamii (strain DSM 17664 / CCUG 51855 / 37) protein is Ribosomal RNA large subunit methyltransferase M.